A 393-amino-acid chain; its full sequence is Ferrochelatase, mitochondrial (393 aa).

The transit peptide at 1-31 (MLSRTIRTQGSFLRRSQLTITRSFSVTFNMQ) directs the protein to the mitochondrion. Asp351 is a catalytic residue.

It belongs to the ferrochelatase family. In terms of processing, the leader peptide may be processed in two proteolytic steps, first between Ser-23 and Phe-24, second and by a different protease, to yield the mature protein.

The protein localises to the mitochondrion inner membrane. It catalyses the reaction heme b + 2 H(+) = protoporphyrin IX + Fe(2+). The protein operates within porphyrin-containing compound metabolism; protoheme biosynthesis; protoheme from protoporphyrin-IX: step 1/1. Catalyzes the ferrous insertion into protoporphyrin IX. This chain is Ferrochelatase, mitochondrial (HEM15), found in Saccharomyces cerevisiae (strain ATCC 204508 / S288c) (Baker's yeast).